The following is a 180-amino-acid chain: NADH-quinone oxidoreductase subunit I (180 aa).

4Fe-4S ferredoxin-type domains follow at residues 50–80 (LTRD…LQKA) and 90–119 (EFFR…LTPD). Residues C60, C63, C66, C70, C99, C102, C105, and C109 each coordinate [4Fe-4S] cluster.

It belongs to the complex I 23 kDa subunit family. In terms of assembly, NDH-1 is composed of 13 different subunits. Subunits NuoA, H, J, K, L, M, N constitute the membrane sector of the complex. [4Fe-4S] cluster serves as cofactor.

Its subcellular location is the cell inner membrane. The enzyme catalyses a quinone + NADH + 5 H(+)(in) = a quinol + NAD(+) + 4 H(+)(out). In terms of biological role, NDH-1 shuttles electrons from NADH, via FMN and iron-sulfur (Fe-S) centers, to quinones in the respiratory chain. The immediate electron acceptor for the enzyme in this species is believed to be ubiquinone. Couples the redox reaction to proton translocation (for every two electrons transferred, four hydrogen ions are translocated across the cytoplasmic membrane), and thus conserves the redox energy in a proton gradient. This Pectobacterium atrosepticum (strain SCRI 1043 / ATCC BAA-672) (Erwinia carotovora subsp. atroseptica) protein is NADH-quinone oxidoreductase subunit I.